Here is a 192-residue protein sequence, read N- to C-terminus: Probable nicotinate-nucleotide adenylyltransferase (192 aa).

This sequence belongs to the NadD family.

The catalysed reaction is nicotinate beta-D-ribonucleotide + ATP + H(+) = deamido-NAD(+) + diphosphate. It participates in cofactor biosynthesis; NAD(+) biosynthesis; deamido-NAD(+) from nicotinate D-ribonucleotide: step 1/1. Functionally, catalyzes the reversible adenylation of nicotinate mononucleotide (NaMN) to nicotinic acid adenine dinucleotide (NaAD). The chain is Probable nicotinate-nucleotide adenylyltransferase from Bradyrhizobium sp. (strain ORS 278).